The following is a 141-amino-acid chain: Thioredoxin-like protein SkfH (141 aa).

The region spanning 2-141 (KDEQMLTEWP…DKMLKKIAGL (140 aa)) is the Thioredoxin domain. The cysteines at positions 41 and 44 are disulfide-linked.

Functionally, required for production of the bacteriocin SkfA. This chain is Thioredoxin-like protein SkfH, found in Bacillus subtilis (strain 168).